The following is a 103-amino-acid chain: Small ribosomal subunit protein uS10 (103 aa).

Belongs to the universal ribosomal protein uS10 family. As to quaternary structure, part of the 30S ribosomal subunit.

Involved in the binding of tRNA to the ribosomes. This is Small ribosomal subunit protein uS10 from Vibrio campbellii (strain ATCC BAA-1116).